We begin with the raw amino-acid sequence, 162 residues long: MKRGVATLPVILVILLSVAAGAGAWLLVRGHGPQQPEISAYSHGHLTRVGPYLYCNVVDLDDCQTPQAQGELPVSERYPVQLSVPEVISRAPWRLLQVYQDPANTTSTLFRPDTRLAVTIPTVDPQRGRLTGIVVQLLTLVVDHSGELRDVPHAEWSVRLIF.

The signal sequence occupies residues 1 to 24; sequence MKRGVATLPVILVILLSVAAGAGA.

This is an uncharacterized protein from Mycobacterium bovis (strain ATCC BAA-935 / AF2122/97).